The primary structure comprises 170 residues: Protein-lysine myristoyltransferase HlyC (170 aa).

His23 is an active-site residue. Heme is bound at residue His151.

Belongs to the RTX toxin acyltransferase family. Monomer. In terms of processing, proteolytically cleaved by the protease systems ClpAP, ClpXP and FtsH, leading to its degradation.

It is found in the cytoplasm. It catalyses the reaction tetradecanoyl-[ACP] + L-lysyl-[protein] = N(6)-tetradecanoyl-L-lysyl-[protein] + holo-[ACP] + H(+). With respect to regulation, the acyltransferase activity is inhibited by heme. Protein-lysine myristoyltransferase that catalyzes myristoylation of the protoxin (HlyA) at two internal lysine residues, thereby converting it to the active toxin. The polypeptide is Protein-lysine myristoyltransferase HlyC (Escherichia coli).